The chain runs to 475 residues: Ribulose bisphosphate carboxylase large chain (475 aa).

Positions 1–2 (MS) are excised as a propeptide. Pro3 bears the N-acetylproline mark. At Lys14 the chain carries N6,N6,N6-trimethyllysine. Substrate-binding residues include Asn123 and Thr173. Residue Lys175 is the Proton acceptor of the active site. Substrate is bound at residue Lys177. Mg(2+) contacts are provided by Lys201, Asp203, and Glu204. Lys201 bears the N6-carboxylysine mark. His294 functions as the Proton acceptor in the catalytic mechanism. Substrate-binding residues include Arg295, His327, and Ser379.

Belongs to the RuBisCO large chain family. Type I subfamily. Heterohexadecamer of 8 large chains and 8 small chains; disulfide-linked. The disulfide link is formed within the large subunit homodimers. It depends on Mg(2+) as a cofactor. Post-translationally, the disulfide bond which can form in the large chain dimeric partners within the hexadecamer appears to be associated with oxidative stress and protein turnover.

It localises to the plastid. The protein localises to the chloroplast. The catalysed reaction is 2 (2R)-3-phosphoglycerate + 2 H(+) = D-ribulose 1,5-bisphosphate + CO2 + H2O. The enzyme catalyses D-ribulose 1,5-bisphosphate + O2 = 2-phosphoglycolate + (2R)-3-phosphoglycerate + 2 H(+). RuBisCO catalyzes two reactions: the carboxylation of D-ribulose 1,5-bisphosphate, the primary event in carbon dioxide fixation, as well as the oxidative fragmentation of the pentose substrate in the photorespiration process. Both reactions occur simultaneously and in competition at the same active site. This Pinus balfouriana (Foxtail pine) protein is Ribulose bisphosphate carboxylase large chain.